The following is a 149-amino-acid chain: Nucleoside diphosphate kinase (149 aa).

Residues Lys-9, Phe-57, Arg-85, Thr-91, Arg-102, and Asn-112 each contribute to the ATP site. The Pros-phosphohistidine intermediate role is filled by His-115.

This sequence belongs to the NDK family. As to quaternary structure, homotetramer. Requires Mg(2+) as cofactor.

Its subcellular location is the cytoplasm. The catalysed reaction is dZDP + ATP = dZTP + ADP. The enzyme catalyses a 2'-deoxyribonucleoside 5'-diphosphate + ATP = a 2'-deoxyribonucleoside 5'-triphosphate + ADP. It catalyses the reaction a ribonucleoside 5'-diphosphate + ATP = a ribonucleoside 5'-triphosphate + ADP. It participates in purine metabolism. In terms of biological role, major role in the synthesis of nucleoside triphosphates other than ATP. The ATP gamma phosphate is transferred to the NDP beta phosphate via a ping-pong mechanism, using a phosphorylated active-site intermediate. Functionally, (Microbial infection) Catalyzes the phosphorylation of dZDP to dZTP, when the bacterium is infected by a phage that produces the substrate for the synthesis of dZTP (2- amino-2'-deoxyadenosine 5'-triphosphate), which is then used by the phage as a DNA polymerase substrate. This chain is Nucleoside diphosphate kinase, found in Synechococcus sp. (strain JA-3-3Ab) (Cyanobacteria bacterium Yellowstone A-Prime).